The primary structure comprises 57 residues: Small ribosomal subunit protein bS21 (57 aa).

The segment at 22-57 is disordered; that stretch reads QCSKSGVLSEAKKRKHYEKPSEKRKRKATEKRNSRK. Over residues 33–57 the composition is skewed to basic residues; that stretch reads KKRKHYEKPSEKRKRKATEKRNSRK.

Belongs to the bacterial ribosomal protein bS21 family.

The protein is Small ribosomal subunit protein bS21 of Natranaerobius thermophilus (strain ATCC BAA-1301 / DSM 18059 / JW/NM-WN-LF).